The chain runs to 236 residues: 2-C-methyl-D-erythritol 4-phosphate cytidylyltransferase (236 aa).

It belongs to the IspD/TarI cytidylyltransferase family. IspD subfamily. As to quaternary structure, homodimer.

It carries out the reaction 2-C-methyl-D-erythritol 4-phosphate + CTP + H(+) = 4-CDP-2-C-methyl-D-erythritol + diphosphate. It functions in the pathway isoprenoid biosynthesis; isopentenyl diphosphate biosynthesis via DXP pathway; isopentenyl diphosphate from 1-deoxy-D-xylulose 5-phosphate: step 2/6. Its function is as follows. Catalyzes the formation of 4-diphosphocytidyl-2-C-methyl-D-erythritol from CTP and 2-C-methyl-D-erythritol 4-phosphate (MEP). The chain is 2-C-methyl-D-erythritol 4-phosphate cytidylyltransferase from Salmonella paratyphi C (strain RKS4594).